Reading from the N-terminus, the 376-residue chain is Alanine racemase (376 aa).

The active-site Proton acceptor; specific for D-alanine is lysine 36. Lysine 36 carries the N6-(pyridoxal phosphate)lysine modification. Position 134 (arginine 134) interacts with substrate. The active-site Proton acceptor; specific for L-alanine is tyrosine 266. Substrate is bound at residue methionine 314.

It belongs to the alanine racemase family. Requires pyridoxal 5'-phosphate as cofactor.

It catalyses the reaction L-alanine = D-alanine. It functions in the pathway amino-acid biosynthesis; D-alanine biosynthesis; D-alanine from L-alanine: step 1/1. In terms of biological role, catalyzes the interconversion of L-alanine and D-alanine. May also act on other amino acids. The chain is Alanine racemase (alr) from Nitratidesulfovibrio vulgaris (strain ATCC 29579 / DSM 644 / CCUG 34227 / NCIMB 8303 / VKM B-1760 / Hildenborough) (Desulfovibrio vulgaris).